The primary structure comprises 514 residues: tRNA-2-methylthio-N(6)-dimethylallyladenosine synthase (514 aa).

The interval 1–21 (MNEEQRKASSVDVLAERDKKA) is disordered. The MTTase N-terminal domain maps to 68–186 (RTFLIKTYGC…LPEILEEAYL (119 aa)). Residues cysteine 77, cysteine 113, cysteine 147, cysteine 223, cysteine 227, and cysteine 230 each contribute to the [4Fe-4S] cluster site. One can recognise a Radical SAM core domain in the interval 209 to 440 (REGNIKAWVN…KKVGHYSQIA (232 aa)). Positions 442–505 (SKYEGQTVTV…QYSLNGSFIK (64 aa)) constitute a TRAM domain.

The protein belongs to the methylthiotransferase family. MiaB subfamily. In terms of assembly, monomer. The cofactor is [4Fe-4S] cluster.

It is found in the cytoplasm. It catalyses the reaction N(6)-dimethylallyladenosine(37) in tRNA + (sulfur carrier)-SH + AH2 + 2 S-adenosyl-L-methionine = 2-methylsulfanyl-N(6)-dimethylallyladenosine(37) in tRNA + (sulfur carrier)-H + 5'-deoxyadenosine + L-methionine + A + S-adenosyl-L-homocysteine + 2 H(+). In terms of biological role, catalyzes the methylthiolation of N6-(dimethylallyl)adenosine (i(6)A), leading to the formation of 2-methylthio-N6-(dimethylallyl)adenosine (ms(2)i(6)A) at position 37 in tRNAs that read codons beginning with uridine. This is tRNA-2-methylthio-N(6)-dimethylallyladenosine synthase from Staphylococcus aureus (strain USA300 / TCH1516).